A 476-amino-acid chain; its full sequence is Bifunctional protein HldE (476 aa).

Residues 1 to 318 (MKPILPDYSQ…AEAIHGSQDT (318 aa)) are ribokinase. 195–198 (NMAE) contributes to the ATP binding site. Asp-264 is an active-site residue. The interval 344 to 476 (MTNGCFDILH…IIKAIKGGRG (133 aa)) is cytidylyltransferase.

This sequence in the N-terminal section; belongs to the carbohydrate kinase PfkB family. It in the C-terminal section; belongs to the cytidylyltransferase family. As to quaternary structure, homodimer.

It carries out the reaction D-glycero-beta-D-manno-heptose 7-phosphate + ATP = D-glycero-beta-D-manno-heptose 1,7-bisphosphate + ADP + H(+). It catalyses the reaction D-glycero-beta-D-manno-heptose 1-phosphate + ATP + H(+) = ADP-D-glycero-beta-D-manno-heptose + diphosphate. It functions in the pathway nucleotide-sugar biosynthesis; ADP-L-glycero-beta-D-manno-heptose biosynthesis; ADP-L-glycero-beta-D-manno-heptose from D-glycero-beta-D-manno-heptose 7-phosphate: step 1/4. The protein operates within nucleotide-sugar biosynthesis; ADP-L-glycero-beta-D-manno-heptose biosynthesis; ADP-L-glycero-beta-D-manno-heptose from D-glycero-beta-D-manno-heptose 7-phosphate: step 3/4. In terms of biological role, catalyzes the phosphorylation of D-glycero-D-manno-heptose 7-phosphate at the C-1 position to selectively form D-glycero-beta-D-manno-heptose-1,7-bisphosphate. Functionally, catalyzes the ADP transfer from ATP to D-glycero-beta-D-manno-heptose 1-phosphate, yielding ADP-D-glycero-beta-D-manno-heptose. The chain is Bifunctional protein HldE from Vibrio atlanticus (strain LGP32) (Vibrio splendidus (strain Mel32)).